Consider the following 690-residue polypeptide: Quinohemoprotein alcohol dehydrogenase ADH IIB (690 aa).

An N-terminal signal peptide occupies residues Met1–Ala22. Position 81 (Glu81) interacts with pyrroloquinoline quinone. Cys127 and Cys128 form a disulfide bridge. Pyrroloquinoline quinone contacts are provided by residues Arg133, Thr177, and Gly193–Ala194. Position 195 (Glu195) interacts with Ca(2+). Thr252 provides a ligand contact to pyrroloquinoline quinone. Ca(2+) contacts are provided by Asn272 and Asp317. Asp317 acts as the Proton acceptor in catalysis. Pyrroloquinoline quinone-binding positions include Lys344, Asn404–Trp405, and Val547. The Cytochrome c domain occupies Glu600–Glu678. Residues Cys613, Cys616, His617, and Met655 each contribute to the heme c site.

Belongs to the bacterial PQQ dehydrogenase family. In terms of assembly, monomer. It depends on pyrroloquinoline quinone as a cofactor. Requires Ca(2+) as cofactor. The cofactor is heme c.

The protein localises to the periplasm. It carries out the reaction 2 oxidized [azurin] + a primary alcohol = 2 reduced [azurin] + an aldehyde + 2 H(+). With respect to regulation, inhibited by 10 mM 1-butanol. Functionally, catalyzes the dye-linked oxidation of primary alcohols to the corresponding aldehydes and the (subsequent) oxidation of the aldehydes to carboxylic acids. Exhibits activity with longer mono-alcohols (C-4 to C-7) but not with methanol or glycerol. Reacts with 1,2-propanediol and 1,3-propanediol but not with sugar alcohols such as D-sorbitol. This chain is Quinohemoprotein alcohol dehydrogenase ADH IIB, found in Pseudomonas putida (Arthrobacter siderocapsulatus).